Consider the following 61-residue polypeptide: Large ribosomal subunit protein eL37 (61 aa).

Zn(2+) is bound by residues C19, C22, C34, and C37. The segment at 19 to 37 (CRRCGRNAYNVSKHYCAAC) adopts a C4-type zinc-finger fold.

The protein belongs to the eukaryotic ribosomal protein eL37 family. It depends on Zn(2+) as a cofactor.

Its function is as follows. Binds to the 23S rRNA. This is Large ribosomal subunit protein eL37 from Saccharolobus islandicus (strain Y.N.15.51 / Yellowstone #2) (Sulfolobus islandicus).